Here is a 158-residue protein sequence, read N- to C-terminus: Cyclic pyranopterin monophosphate synthase (158 aa).

Substrate is bound by residues 75-77 (LCH) and 113-114 (ME). Asp128 is an active-site residue.

It belongs to the MoaC family. As to quaternary structure, homohexamer; trimer of dimers.

The catalysed reaction is (8S)-3',8-cyclo-7,8-dihydroguanosine 5'-triphosphate = cyclic pyranopterin phosphate + diphosphate. Its pathway is cofactor biosynthesis; molybdopterin biosynthesis. Catalyzes the conversion of (8S)-3',8-cyclo-7,8-dihydroguanosine 5'-triphosphate to cyclic pyranopterin monophosphate (cPMP). The polypeptide is Cyclic pyranopterin monophosphate synthase (Acidiphilium cryptum (strain JF-5)).